A 310-amino-acid polypeptide reads, in one-letter code: Phytoene synthase 2, chloroplastic (310 aa).

Residues 1-25 (DPDIVLPGNLGLLSEAYDRCGEVCA) constitute a chloroplast transit peptide.

This sequence belongs to the phytoene/squalene synthase family. As to quaternary structure, monomer.

The protein localises to the plastid. The protein resides in the chloroplast. The enzyme catalyses 2 (2E,6E,10E)-geranylgeranyl diphosphate = 15-cis-phytoene + 2 diphosphate. It functions in the pathway carotenoid biosynthesis; phytoene biosynthesis; all-trans-phytoene from geranylgeranyl diphosphate: step 1/1. In terms of biological role, catalyzes the reaction from prephytoene diphosphate to phytoene. The chain is Phytoene synthase 2, chloroplastic (PSY2) from Solanum lycopersicum (Tomato).